We begin with the raw amino-acid sequence, 298 residues long: N-acetylmuramic acid 6-phosphate etherase (298 aa).

The SIS domain maps to 55–218 (ITESLRRGGR…STASMVRLGK (164 aa)). Catalysis depends on glutamate 83, which acts as the Proton donor. Residue glutamate 114 is part of the active site.

This sequence belongs to the GCKR-like family. MurNAc-6-P etherase subfamily. Homodimer.

The catalysed reaction is N-acetyl-D-muramate 6-phosphate + H2O = N-acetyl-D-glucosamine 6-phosphate + (R)-lactate. Its pathway is amino-sugar metabolism; N-acetylmuramate degradation. Functionally, specifically catalyzes the cleavage of the D-lactyl ether substituent of MurNAc 6-phosphate, producing GlcNAc 6-phosphate and D-lactate. This Mycolicibacterium smegmatis (strain ATCC 700084 / mc(2)155) (Mycobacterium smegmatis) protein is N-acetylmuramic acid 6-phosphate etherase.